The chain runs to 289 residues: uncharacterized protein (289 aa).

The signal sequence occupies residues 1–19; sequence MAKWLGAPLARGVSTATRA. 2 helical membrane-spanning segments follow: residues 90-110 and 257-277; these read GLLAAAFVASVLLGVGIGWGV and AALSLSLYVSSDYGGGYLVFA.

The protein resides in the cell membrane. This is an uncharacterized protein from Mycobacterium tuberculosis (strain CDC 1551 / Oshkosh).